A 400-amino-acid chain; its full sequence is MTTLGTPLSPSATKVMLLGSGELGKEVLIALQRLGVETIAVDRYENAPGQQVAHHARTITMSDGEQLKALIEAERPDLVVPEIEAIATPMLEALEAAGVVRVIPTARAARLTMDREGIRRLAAETLGLPTSPYKFCDSLEELQAAIDGGIGYPCVVKPVMSSSGKGQSKIDGPADVKAAWDYAMAGGRVSHGRVIVEGFIDFDYEITLLTVRAVGANGEVETHFCEPIGHVQVAGDYVESWQPHPMHPKALETSQHIARAVTADLGGQGLFGVELFVKGEQVWFSEVSPRPHDTGMVTMITQWQNEFELHARAILGLPVSTALRAPGASAVIYGGVEAEGIVFDGVDEALRVPQTELRLFGKPESFTKRRMGVALAYAEDVDTARERAKEAAGKVKPRKA.

Residues 22–23 (EL) and Glu-82 each bind N(1)-(5-phospho-beta-D-ribosyl)glycinamide. ATP-binding positions include Arg-115, Lys-157, 162-167 (SSGKGQ), 197-200 (EGFI), and Glu-205. Residues 120 to 315 (RLAAETLGLP…EFELHARAIL (196 aa)) enclose the ATP-grasp domain. The Mg(2+) site is built by Glu-274 and Glu-286. N(1)-(5-phospho-beta-D-ribosyl)glycinamide-binding positions include Asp-293, Lys-362, and 369–370 (RR).

This sequence belongs to the PurK/PurT family. Homodimer.

It carries out the reaction N(1)-(5-phospho-beta-D-ribosyl)glycinamide + formate + ATP = N(2)-formyl-N(1)-(5-phospho-beta-D-ribosyl)glycinamide + ADP + phosphate + H(+). Its pathway is purine metabolism; IMP biosynthesis via de novo pathway; N(2)-formyl-N(1)-(5-phospho-D-ribosyl)glycinamide from N(1)-(5-phospho-D-ribosyl)glycinamide (formate route): step 1/1. Functionally, involved in the de novo purine biosynthesis. Catalyzes the transfer of formate to 5-phospho-ribosyl-glycinamide (GAR), producing 5-phospho-ribosyl-N-formylglycinamide (FGAR). Formate is provided by PurU via hydrolysis of 10-formyl-tetrahydrofolate. This Cupriavidus metallidurans (strain ATCC 43123 / DSM 2839 / NBRC 102507 / CH34) (Ralstonia metallidurans) protein is Formate-dependent phosphoribosylglycinamide formyltransferase.